The chain runs to 464 residues: METTTTPLLPGDRSRCGWLRRRLRLKNPLSSELSGAVGDLGTFIPIVLTLTLVSNLDLSTTLIFTGFYNIATGLLFDIPMPVQPMKSIAAVAVSESPHLTPSQIAAAGASTAATLLLLGATGAMSFLYNIIPLPVVRGVQLSQGLQFAFTAIKYVRFNYDTATLKPSSSPRIWLGLDGLILALAALLFIILSTGSGNDREAEDGDLAETSSNESQSRRRRLRLLSSIPSALIVFALGLVLCFIRDPSIFKDLKFGPSKFHILRISWDDWKIGFLRAAIPQIPLSVLNSVIAVCKLSNDLFDKELSATTVSISVGVMNLIGCWFGAMPVCHGAGGLAGQYRFGARSGLSVIFLGIGKLIVGLVFGNSFVRILSQFPIGILGVLLLFAGIELAMASKDMNSKEDSFIMLVCAAVSMTGSSAALGFGCGVVLYLLLKLRTLDCSSVTLFSRSSDESQVDSEAAPRDV.

The Tonoplast targeting signal motif lies at 8–9; sequence LL. Transmembrane regions (helical) follow at residues 33-53, 62-82, 116-136, 172-192, 223-243, 309-329, 348-368, 374-394, and 404-424; these read LSGA…LTLV, LIFT…PMPV, LLLG…LPVV, IWLG…IILS, LLSS…LCFI, VSIS…MPVC, SVIF…NSFV, FPIG…AMAS, and FIML…LGFG.

This sequence belongs to the SLC26A/SulP transporter (TC 2.A.53) family. As to expression, expressed in leaves. Not detected in roots, shoots and seeds.

The protein resides in the vacuole membrane. Functionally, molybdate transporter required for vacuolar molybdate export during senescence. This is Molybdate transporter 2 (MOT2) from Arabidopsis thaliana (Mouse-ear cress).